The following is a 471-amino-acid chain: Sulfate adenylyltransferase subunit 1 (471 aa).

Residues Lys-22 to Lys-237 form the tr-type G domain. The segment at Gly-31–Ser-38 is G1. Residue Gly-31–Ser-38 participates in GTP binding. A G2 region spans residues Gly-89 to Asp-93. The interval Asp-110–Gly-113 is G3. GTP contacts are provided by residues Asp-110–His-114 and Asn-165–Asp-168. The segment at Asn-165–Asp-168 is G4. The tract at residues Ser-202 to Leu-204 is G5.

It belongs to the TRAFAC class translation factor GTPase superfamily. Classic translation factor GTPase family. CysN/NodQ subfamily. Heterodimer composed of CysD, the smaller subunit, and CysN.

The catalysed reaction is sulfate + ATP + H(+) = adenosine 5'-phosphosulfate + diphosphate. It functions in the pathway sulfur metabolism; hydrogen sulfide biosynthesis; sulfite from sulfate: step 1/3. In terms of biological role, with CysD forms the ATP sulfurylase (ATPS) that catalyzes the adenylation of sulfate producing adenosine 5'-phosphosulfate (APS) and diphosphate, the first enzymatic step in sulfur assimilation pathway. APS synthesis involves the formation of a high-energy phosphoric-sulfuric acid anhydride bond driven by GTP hydrolysis by CysN coupled to ATP hydrolysis by CysD. The sequence is that of Sulfate adenylyltransferase subunit 1 from Saccharophagus degradans (strain 2-40 / ATCC 43961 / DSM 17024).